The primary structure comprises 72 residues: UPF0270 protein KPK_0377 (72 aa).

This sequence belongs to the UPF0270 family.

The protein is UPF0270 protein KPK_0377 of Klebsiella pneumoniae (strain 342).